Consider the following 354-residue polypeptide: Malate dehydrogenase 1, peroxisomal (354 aa).

Residues 6–14 (RIARISAHL) form a peroxisomal targeting signal PTS2 region. Residues 49–55 (GAAGGIG) and D75 each bind NAD(+). 2 residues coordinate substrate: R122 and R128. Residues N135 and 158–160 (ISN) each bind NAD(+). Substrate contacts are provided by N160 and R194. The active-site Proton acceptor is H218. M269 lines the NAD(+) pocket.

This sequence belongs to the LDH/MDH superfamily. MDH type 1 family. Homodimer. Expressed in rosette leaves at low levels.

Its subcellular location is the peroxisome. It catalyses the reaction (S)-malate + NAD(+) = oxaloacetate + NADH + H(+). Its function is as follows. Catalyzes a reversible NAD-dependent dehydrogenase reaction involved in central metabolism and redox homeostasis between organelle compartments. Peroxisomal NAD-dependent malate dehydrogenase involved in fatty acid beta-oxidation. Reoxidizes NADH from the beta-oxidation and provides NAD for the conversion of fatty acyl-CoA to acetyl-CoA. Does not participate directly in the glyoxylate cycle. Required for maintenance of photosynthetic rates under photorespiratory conditions, and carbon flow during photorespiration. Supplies NADH reductant to the peroxisomal hydroxypyruvate reductase (HPR), which reduces hydroxypyruvate into glycerate in the photorespiratory cycle. The chain is Malate dehydrogenase 1, peroxisomal from Arabidopsis thaliana (Mouse-ear cress).